We begin with the raw amino-acid sequence, 202 residues long: Heat shock 22 kDa protein, mitochondrial (202 aa).

The N-terminal 31 residues, 1–31 (MASSLALKRFLSSGLLSSSFLRPVASSASRS), are a transit peptide targeting the mitochondrion. In terms of domain architecture, sHSP spans 94–202 (VLSAASRRGW…RNNVINVKVD (109 aa)).

This sequence belongs to the small heat shock protein (HSP20) family.

The protein localises to the mitochondrion. The sequence is that of Heat shock 22 kDa protein, mitochondrial (HSP22) from Pisum sativum (Garden pea).